The chain runs to 3848 residues: Intermembrane lipid transfer protein tipC (3848 aa).

The 109-residue stretch at 4 to 112 (HIAASVLTKY…KFQDEKQAKL (109 aa)) folds into the Chorein N-terminal domain. Disordered stretches follow at residues 243-268 (IKKE…DEIE), 450-481 (LKLQ…TGGG), 966-985 (QQLQ…SPPL), 1174-1219 (KNNQ…NNNS), 1326-1345 (ERKL…GVST), 1907-1926 (ENIN…TTTT), 2024-2047 (DDYN…NQLP), 2209-2290 (IKPA…NKNL), 2330-2353 (FNPK…SPLL), 2509-2541 (KQLN…NLLG), 3209-3228 (GITN…NNND), and 3310-3342 (INQQ…NTTQ). 2 stretches are compositionally biased toward low complexity: residues 251 to 260 (QQQQQQQQQG) and 452 to 477 (LQQQ…PSTS). The segment covering 1175 to 1190 (NNQNNNQNNNQNNNQN) has biased composition (low complexity). Over residues 1191–1200 (INESSPTVFI) the composition is skewed to polar residues. Positions 1202–1211 (SPPPPPPPPL) are enriched in pro residues. The segment covering 1333–1345 (TSPTTPSSSGVST) has biased composition (low complexity). Composition is skewed to low complexity over residues 2029 to 2044 (DNYN…NSNN), 2217 to 2289 (NNNN…NNKN), and 2335 to 2353 (SSSS…SPLL). Low complexity-rich tracts occupy residues 3212-3228 (NDPN…NNND) and 3311-3342 (NQQP…NTTQ).

The protein belongs to the VPS13 family.

The protein localises to the membrane. Its function is as follows. Mediates the transfer of lipids between membranes at organelle contact sites. The sequence is that of Intermembrane lipid transfer protein tipC (tipC) from Dictyostelium discoideum (Social amoeba).